An 89-amino-acid polypeptide reads, in one-letter code: Small ribosomal subunit protein uS15 (89 aa).

The protein belongs to the universal ribosomal protein uS15 family. Part of the 30S ribosomal subunit. Forms a bridge to the 50S subunit in the 70S ribosome, contacting the 23S rRNA.

Its function is as follows. One of the primary rRNA binding proteins, it binds directly to 16S rRNA where it helps nucleate assembly of the platform of the 30S subunit by binding and bridging several RNA helices of the 16S rRNA. Functionally, forms an intersubunit bridge (bridge B4) with the 23S rRNA of the 50S subunit in the ribosome. The chain is Small ribosomal subunit protein uS15 from Bacteroides thetaiotaomicron (strain ATCC 29148 / DSM 2079 / JCM 5827 / CCUG 10774 / NCTC 10582 / VPI-5482 / E50).